Here is a 338-residue protein sequence, read N- to C-terminus: Phenylalanine--tRNA ligase alpha subunit (338 aa).

E253 serves as a coordination point for Mg(2+).

It belongs to the class-II aminoacyl-tRNA synthetase family. Phe-tRNA synthetase alpha subunit type 1 subfamily. In terms of assembly, tetramer of two alpha and two beta subunits. Requires Mg(2+) as cofactor.

It is found in the cytoplasm. It catalyses the reaction tRNA(Phe) + L-phenylalanine + ATP = L-phenylalanyl-tRNA(Phe) + AMP + diphosphate + H(+). This is Phenylalanine--tRNA ligase alpha subunit from Geotalea uraniireducens (strain Rf4) (Geobacter uraniireducens).